The following is a 607-amino-acid chain: SNW/SKI-interacting protein A (607 aa).

Disordered regions lie at residues 29–77, 178–205, 217–265, 327–434, and 516–607; these read ERYG…GGAF, AQPK…AAFN, EMAQ…IPPC, LQLK…DRDR, and KVMK…ERGR. The span at 35–49 shows a compositional bias: low complexity; sequence SAQSDAAAAAAKPSG. Residues 190 to 353 form an SNW region; sequence SKFIKYKPSQ…QKARMERTGA (164 aa). The segment covering 240-251 has biased composition (pro residues); it reads PPVPVMHSPPRP. 2 coiled-coil regions span residues 313-349 and 391-418; these read AREA…ARME and EREA…LEAR. Composition is skewed to basic and acidic residues over residues 327–339, 379–434, 516–527, 535–550, and 562–571; these read LQLK…EQEL, EQPR…DRDR, KVMKTDRFKPDK, RSGK…KQEE, and EVKKGKKAVE.

Belongs to the SNW family. Interacts with FLO6/SIP4. Interacts with DIS1. As to expression, widely expressed.

Its subcellular location is the nucleus. Functionally, acts as a positive regulator of drought and salt tolerance. Acts as a positive regulator of cell viability. This Oryza sativa subsp. japonica (Rice) protein is SNW/SKI-interacting protein A.